The following is a 155-amino-acid chain: Ribosomal RNA large subunit methyltransferase H (155 aa).

Residues Leu72, Gly103, and 122 to 127 contribute to the S-adenosyl-L-methionine site; that span reads LSALTL.

This sequence belongs to the RNA methyltransferase RlmH family. As to quaternary structure, homodimer.

It is found in the cytoplasm. It catalyses the reaction pseudouridine(1915) in 23S rRNA + S-adenosyl-L-methionine = N(3)-methylpseudouridine(1915) in 23S rRNA + S-adenosyl-L-homocysteine + H(+). Functionally, specifically methylates the pseudouridine at position 1915 (m3Psi1915) in 23S rRNA. In Salmonella choleraesuis (strain SC-B67), this protein is Ribosomal RNA large subunit methyltransferase H.